We begin with the raw amino-acid sequence, 80 residues long: Putative antitoxin VapB44 (80 aa).

The tract at residues 40 to 68 (NQNPQPAASQEDAFHGFEPLPHRGGAVSN) is disordered.

Its function is as follows. Possibly the antitoxin component of a type II toxin-antitoxin (TA) system. Its cognate toxin is VapC44 (Potential). The polypeptide is Putative antitoxin VapB44 (vapB44) (Mycobacterium tuberculosis (strain CDC 1551 / Oshkosh)).